Reading from the N-terminus, the 304-residue chain is D-alanine--D-alanine ligase (304 aa).

The 197-residue stretch at 103–299 (KLIWQALGLP…FADLCIEILK (197 aa)) folds into the ATP-grasp domain. 129 to 184 (EEKLGLPMFVKPAAEGSSVGVVKVKGKGRLKSVYEELKHLQGEIIAERFIGGGEYS) provides a ligand contact to ATP. Positions 253, 266, and 268 each coordinate Mg(2+).

Belongs to the D-alanine--D-alanine ligase family. The cofactor is Mg(2+). Mn(2+) serves as cofactor.

The protein resides in the cytoplasm. The enzyme catalyses 2 D-alanine + ATP = D-alanyl-D-alanine + ADP + phosphate + H(+). It participates in cell wall biogenesis; peptidoglycan biosynthesis. Its function is as follows. Cell wall formation. The polypeptide is D-alanine--D-alanine ligase (Neisseria meningitidis serogroup B (strain ATCC BAA-335 / MC58)).